Consider the following 449-residue polypeptide: MYHIWIKFLAAWIFLKRFNGVHVMQAKAPMYRNEPFLVFWNAPTTQCRLRYKVDLDLKTFHIVSNANDSLSGSAVTIFYPNHLGVYPHIDDRGHFFHGIIPQNESLTKHLNKSKSDINRIIPLKAFHGLGVIDWENWRPQWDRNWGSKNVYRNRSIQFARDLHPELSEDKIRRLAKKEYEKAAKSFMRDTLLLAEEMRPDGYWGYYLYPDCQNYDYKTKGDQYTGKCPEIEMSRNDQLLWLWRDSTALFPNVYLEIILRSSDNALKFVHHRLKEAMRIASMAREDYALPVFAYARPFYAYTFEPLTQEDLVTTVGETAAMGAAGIVFWGSMQYASTVDSCQKVKKYMNGPLGRYIVNVTTAAKICSRVFCRKNGRCVRKHSDSNAFLHLFPESFRIMVYANATEKKVIVKGKLELENLIYLRENFMCQCYQGWKGLYCEEYSIKDIRKI.

The signal sequence occupies residues 1–23; that stretch reads MYHIWIKFLAAWIFLKRFNGVHV. 2 disulfides stabilise this stretch: Cys-47–Cys-340 and Cys-211–Cys-227. 3 N-linked (GlcNAc...) asparagine glycosylation sites follow: Asn-67, Asn-103, and Asn-111. The active-site Proton donor is Glu-135. A glycan (N-linked (GlcNAc...) asparagine) is linked at Asn-153. An N-linked (GlcNAc...) asparagine glycan is attached at Asn-357. Cystine bridges form between Cys-365–Cys-376, Cys-370–Cys-427, and Cys-429–Cys-438. A glycan (N-linked (GlcNAc...) asparagine) is linked at Asn-401. Positions 427–438 constitute an EGF-like domain; that stretch reads CQCYQGWKGLYC.

Belongs to the glycosyl hydrolase 56 family. As to quaternary structure, monomer. In terms of tissue distribution, expressed by the venom gland.

The protein localises to the secreted. It catalyses the reaction Random hydrolysis of (1-&gt;4)-linkages between N-acetyl-beta-D-glucosamine and D-glucuronate residues in hyaluronate.. In terms of biological role, snake venom endo-hyaluronidase that degrades hyaluronan to smaller oligosaccharide fragments. In venom, it is not toxic by itself, but increases the diffusion of other venom proteins by degrading the extracellular matrix. In addition, it displays antiedematogenic activity. The sequence is that of Hyaluronidase from Echis pyramidum leakeyi (Leakey's carpet viper).